Consider the following 499-residue polypeptide: Glycerol kinase (499 aa).

Thr13 lines the ADP pocket. Positions 13, 14, and 15 each coordinate ATP. Residue Thr13 participates in sn-glycerol 3-phosphate binding. Arg17 serves as a coordination point for ADP. The sn-glycerol 3-phosphate site is built by Arg83, Glu84, Tyr135, and Asp245. Residues Arg83, Glu84, Tyr135, Asp245, and Gln246 each contribute to the glycerol site. Residues Thr267 and Gly310 each coordinate ADP. Positions 267, 310, 314, and 411 each coordinate ATP. Positions 411 and 415 each coordinate ADP.

The protein belongs to the FGGY kinase family.

The enzyme catalyses glycerol + ATP = sn-glycerol 3-phosphate + ADP + H(+). It functions in the pathway polyol metabolism; glycerol degradation via glycerol kinase pathway; sn-glycerol 3-phosphate from glycerol: step 1/1. Its activity is regulated as follows. Inhibited by fructose 1,6-bisphosphate (FBP). In terms of biological role, key enzyme in the regulation of glycerol uptake and metabolism. Catalyzes the phosphorylation of glycerol to yield sn-glycerol 3-phosphate. In Xanthomonas axonopodis pv. citri (strain 306), this protein is Glycerol kinase.